Here is an 820-residue protein sequence, read N- to C-terminus: Serine/threonine-protein phosphatase 4 regulatory subunit 3-A (820 aa).

Residues 1 to 100 (MSDTRRRVKV…DEIWEKICQV (100 aa)) enclose the WH1 domain. The span at 682–694 (ELWFNEDDEEEGE) shows a compositional bias: acidic residues. Disordered stretches follow at residues 682–712 (ELWFNEDDEEEGEAVVPPVEKTKPEDDFPEG) and 750–820 (AANG…RLGS). Basic and acidic residues predominate over residues 701–712 (EKTKPEDDFPEG). Composition is skewed to polar residues over residues 750–761 (AANGANSTNSKS) and 768–790 (PATSNGSSSKNTSLTTTVASTKG). Over residues 798–809 (YPDDEDEEEEED) the composition is skewed to acidic residues.

This sequence belongs to the SMEK family. In terms of assembly, serine/threonine-protein phosphatase 4 (PP4) occurs in different assemblies of the catalytic and one or more regulatory subunits.

In terms of biological role, regulatory subunit of serine/threonine-protein phosphatase 4 (PP4). The protein is Serine/threonine-protein phosphatase 4 regulatory subunit 3-A of Xenopus laevis (African clawed frog).